The following is a 140-amino-acid chain: Large ribosomal subunit protein uL14 (140 aa).

This sequence belongs to the universal ribosomal protein uL14 family. Component of the large ribosomal subunit.

Its subcellular location is the cytoplasm. Its function is as follows. Component of the large ribosomal subunit. The ribosome is a large ribonucleoprotein complex responsible for the synthesis of proteins in the cell. This Danio rerio (Zebrafish) protein is Large ribosomal subunit protein uL14 (rpl23).